The sequence spans 116 residues: Ribonuclease P protein component (116 aa).

The protein belongs to the RnpA family. Consists of a catalytic RNA component (M1 or rnpB) and a protein subunit.

The catalysed reaction is Endonucleolytic cleavage of RNA, removing 5'-extranucleotides from tRNA precursor.. Functionally, RNaseP catalyzes the removal of the 5'-leader sequence from pre-tRNA to produce the mature 5'-terminus. It can also cleave other RNA substrates such as 4.5S RNA. The protein component plays an auxiliary but essential role in vivo by binding to the 5'-leader sequence and broadening the substrate specificity of the ribozyme. In Acholeplasma laidlawii (strain PG-8A), this protein is Ribonuclease P protein component.